Consider the following 780-residue polypeptide: ATP-dependent 6-phosphofructokinase, muscle type (780 aa).

An N-acetylthreonine modification is found at T2. The tract at residues T2 to H390 is N-terminal catalytic PFK domain 1. ATP is bound by residues G25, R88–C89, and G118–S121. Mg(2+) is bound at residue D119. A Phosphoserine modification is found at S133. Residues S164–D166, R201, M208–R210, E264, R292, and H298–R301 each bind substrate. D166 functions as the Proton acceptor in the catalytic mechanism. S377 bears the Phosphoserine mark. Residues V391 to H401 are interdomain linker. A C-terminal regulatory PFK domain 2 region spans residues T402–V780. Beta-D-fructose 2,6-bisphosphate is bound by residues R471 and T528–N532. O-linked (GlcNAc) serine glycosylation is present at S530. K557 carries the N6-(2-hydroxyisobutyryl)lysine modification. Residues R566, M573–G575, E629, R655, and H661–Q664 each bind beta-D-fructose 2,6-bisphosphate. S667 bears the Phosphoserine mark. R735 lines the beta-D-fructose 2,6-bisphosphate pocket. S775 is subject to Phosphoserine.

Belongs to the phosphofructokinase type A (PFKA) family. ATP-dependent PFK group I subfamily. Eukaryotic two domain clade 'E' sub-subfamily. As to quaternary structure, homo- and heterotetramers. Phosphofructokinase (PFK) enzyme functions as a tetramer composed of different combinations of 3 types of subunits, called PFKM (M), PFKL (L) and PFKP (P). The composition of the PFK tetramer differs according to the tissue type it is present in. The kinetic and regulatory properties of the tetrameric enzyme are dependent on the subunit composition, hence can vary across tissues. Isoform 2 and isoform 3 interact (via N-terminal testis-specific region) with GSTM5. Isoform 2 and isoform 3 interact (via C-terminus) with HK1 (via N-terminal spermatogenic cell-specific region). Mg(2+) is required as a cofactor. Post-translationally, glcNAcylation decreases enzyme activity. As to expression, isoform 1 is expressed in skeletal muscle (at protein level). Isoform 2 and isoform 3 are testis-specific and are detected in quiescent sperm (at protein level). They are first detected in the cytoplasm of round spermatids and subsequently in the flagellum of elongated spermatids extending into the seminiferous tubule lumen (at protein level). Isoform 2 is expressed at higher level than isoform 3 in testis.

Its subcellular location is the cytoplasm. The protein localises to the cell projection. It is found in the cilium. It localises to the flagellum. It catalyses the reaction beta-D-fructose 6-phosphate + ATP = beta-D-fructose 1,6-bisphosphate + ADP + H(+). The protein operates within carbohydrate degradation; glycolysis; D-glyceraldehyde 3-phosphate and glycerone phosphate from D-glucose: step 3/4. Allosterically activated by ADP, AMP, or fructose 2,6-bisphosphate, and allosterically inhibited by ATP or citrate. Functionally, catalyzes the phosphorylation of D-fructose 6-phosphate to fructose 1,6-bisphosphate by ATP, the first committing step of glycolysis. In Mus musculus (Mouse), this protein is ATP-dependent 6-phosphofructokinase, muscle type (Pfkm).